A 415-amino-acid chain; its full sequence is S-inosyl-L-homocysteine hydrolase (415 aa).

Substrate contacts are provided by aspartate 123 and glutamate 148. 149–151 (TTT) serves as a coordination point for NAD(+). Substrate-binding residues include lysine 178 and aspartate 182. NAD(+)-binding positions include asparagine 183, 212 to 217 (GYGWCG), glutamate 235, 291 to 293 (AGH), and asparagine 337.

Belongs to the adenosylhomocysteinase family. It depends on NAD(+) as a cofactor.

The protein resides in the cytoplasm. It carries out the reaction S-inosyl-L-homocysteine + H2O = L-homocysteine + inosine. Its pathway is amino-acid biosynthesis; S-adenosyl-L-methionine biosynthesis. Functionally, catalyzes the hydrolysis of S-inosyl-L-homocysteine (SIH) to L-homocysteine (Hcy) and inosine. Likely functions in a S-adenosyl-L-methionine (SAM) recycling pathway from S-adenosyl-L-homocysteine (SAH) produced from SAM-dependent methylation reactions. Can also catalyze the reverse reaction in vitro, i.e. the synthesis of SIH from Hcy and inosine. The polypeptide is S-inosyl-L-homocysteine hydrolase (Methanococcus maripaludis (strain DSM 14266 / JCM 13030 / NBRC 101832 / S2 / LL)).